A 116-amino-acid polypeptide reads, in one-letter code: Large ribosomal subunit protein bL19c (116 aa).

This sequence belongs to the bacterial ribosomal protein bL19 family.

Its subcellular location is the plastid. The protein resides in the chloroplast. This is Large ribosomal subunit protein bL19c from Cyanidium caldarium (Red alga).